The following is a 411-amino-acid chain: MQYLISSLIFLIPSLGMLAGLSAAATVTIFLLISFLRGINRHCERLQGVWQSSNNVIPWLDHGIQKIQKDWIPLQAHGITMLFTAWCFISCLFAIHLINSLATFTQVFILLFLGFAVSNSAPFQNRLQLKKALIFGILTAILLFFIEYSSNGFLTRIFKTSFALYMLDRGCALLSITAWVAIIILLSNGKKRHTLMLYILVLYLLSISDSLASFLGFGIGGVIFILTRFMKPIFFKLIAISLITGSLLFPVIAKQIEPQDLSEKYLATQPSAAHRLFIWHFVANKIIEKPILGYGLASSKYIKAGDSEMIDYNGEKWHPLPLHPHNNILQITLELGIIGLILFLCLVYKYLKQISNLENKNFKAISYACFINYYIIGMISYNIWQIWWISSGIWVLVLMKLLVKPDIVIDN.

The next 10 helical transmembrane spans lie at 15–35 (LGMLAGLSAAATVTIFLLISF), 78–98 (GITMLFTAWCFISCLFAIHLI), 101–121 (LATFTQVFILLFLGFAVSNSA), 133–153 (LIFGILTAILLFFIEYSSNGF), 166–186 (MLDRGCALLSITAWVAIIILL), 207–227 (ISDSLASFLGFGIGGVIFILT), 233–253 (IFFKLIAISLITGSLLFPVIA), 328–348 (ILQITLELGIIGLILFLCLVY), 361–381 (NFKAISYACFINYYIIGMISY), and 383–403 (IWQIWWISSGIWVLVLMKLLV).

Belongs to the O-antigen ligase family.

The protein resides in the membrane. This chain is Putative polysaccharide ligase RC0486, found in Rickettsia conorii (strain ATCC VR-613 / Malish 7).